The sequence spans 212 residues: Cell division protein YtfB (212 aa).

The chain crosses the membrane as a helical span at residues 34–50 (GIIIAAIVLVVGFLLPS). The interval 88-127 (NDPDQVAPVAPEPIQEGQPEEQPQTTQTQPFQPDSGIDNQ) is disordered. The span at 99-120 (EPIQEGQPEEQPQTTQTQPFQP) shows a compositional bias: low complexity. An oapA region spans residues 117–212 (PFQPDSGIDN…QPDGSFIRAR (96 aa)).

Belongs to the OapA family.

It localises to the cell inner membrane. Its function is as follows. Cell division protein whose function is related to the generation of a transient cell wall structure. Function is linked to the late stages of cell division. The protein is Cell division protein YtfB (ytfB) of Escherichia coli (strain K12).